Consider the following 150-residue polypeptide: 1,4-dihydroxy-2-naphthoyl-CoA hydrolase (150 aa).

Residue aspartate 19 is part of the active site.

Belongs to the 4-hydroxybenzoyl-CoA thioesterase family. DHNA-CoA hydrolase subfamily.

It catalyses the reaction 1,4-dihydroxy-2-naphthoyl-CoA + H2O = 1,4-dihydroxy-2-naphthoate + CoA + H(+). Its pathway is cofactor biosynthesis; phylloquinone biosynthesis. It participates in quinol/quinone metabolism; 1,4-dihydroxy-2-naphthoate biosynthesis; 1,4-dihydroxy-2-naphthoate from chorismate: step 7/7. In terms of biological role, catalyzes the hydrolysis of 1,4-dihydroxy-2-naphthoyl-CoA (DHNA-CoA) to 1,4-dihydroxy-2-naphthoate (DHNA), a reaction involved in phylloquinone (vitamin K1) biosynthesis. The protein is 1,4-dihydroxy-2-naphthoyl-CoA hydrolase of Prochlorococcus marinus (strain AS9601).